Reading from the N-terminus, the 187-residue chain is Adenine phosphoribosyltransferase 1 (187 aa).

Ser68 is subject to Phosphoserine. 133–137 (ATGGS) provides a ligand contact to AMP.

The protein belongs to the purine/pyrimidine phosphoribosyltransferase family. As to quaternary structure, homodimer. Mg(2+) is required as a cofactor.

Its subcellular location is the cytoplasm. It localises to the nucleus. It catalyses the reaction AMP + diphosphate = 5-phospho-alpha-D-ribose 1-diphosphate + adenine. It participates in purine metabolism; AMP biosynthesis via salvage pathway; AMP from adenine: step 1/1. In terms of biological role, catalyzes a salvage reaction resulting in the formation of AMP, that is energically less costly than de novo synthesis. This is Adenine phosphoribosyltransferase 1 from Saccharomyces cerevisiae (strain ATCC 204508 / S288c) (Baker's yeast).